Here is a 112-residue protein sequence, read N- to C-terminus: T cell receptor alpha variable 9-1 (112 aa).

The first 20 residues, 1 to 20, serve as a signal peptide directing secretion; it reads MNSSPGPAIALFLMFGGING. The Ig-like domain maps to 21–112; the sequence is DSVVQTEGQV…DSAVYFCALS (92 aa). Asn41 carries an N-linked (GlcNAc...) asparagine glycan. Cys42 and Cys109 are disulfide-bonded.

In terms of assembly, alpha-beta TR is a heterodimer composed of an alpha and beta chain; disulfide-linked. The alpha-beta TR is associated with the transmembrane signaling CD3 coreceptor proteins to form the TR-CD3 (TcR or TCR). The assembly of alpha-beta TR heterodimers with CD3 occurs in the endoplasmic reticulum where a single alpha-beta TR heterodimer associates with one CD3D-CD3E heterodimer, one CD3G-CD3E heterodimer and one CD247 homodimer forming a stable octameric structure. CD3D-CD3E and CD3G-CD3E heterodimers preferentially associate with TR alpha and TR beta chains, respectively. The association of the CD247 homodimer is the last step of TcR assembly in the endoplasmic reticulum and is required for transport to the cell surface.

It localises to the cell membrane. V region of the variable domain of T cell receptor (TR) alpha chain that participates in the antigen recognition. Alpha-beta T cell receptors are antigen specific receptors which are essential to the immune response and are present on the cell surface of T lymphocytes. Recognize peptide-major histocompatibility (MH) (pMH) complexes that are displayed by antigen presenting cells (APC), a prerequisite for efficient T cell adaptive immunity against pathogens. Binding of alpha-beta TR to pMH complex initiates TR-CD3 clustering on the cell surface and intracellular activation of LCK that phosphorylates the ITAM motifs of CD3G, CD3D, CD3E and CD247 enabling the recruitment of ZAP70. In turn ZAP70 phosphorylates LAT, which recruits numerous signaling molecules to form the LAT signalosome. The LAT signalosome propagates signal branching to three major signaling pathways, the calcium, the mitogen-activated protein kinase (MAPK) kinase and the nuclear factor NF-kappa-B (NF-kB) pathways, leading to the mobilization of transcription factors that are critical for gene expression and essential for T cell growth and differentiation. The T cell repertoire is generated in the thymus, by V-(D)-J rearrangement. This repertoire is then shaped by intrathymic selection events to generate a peripheral T cell pool of self-MH restricted, non-autoaggressive T cells. Post-thymic interaction of alpha-beta TR with the pMH complexes shapes TR structural and functional avidity. In Homo sapiens (Human), this protein is T cell receptor alpha variable 9-1.